The following is a 466-amino-acid chain: Phosphomethylpyrimidine synthase (466 aa).

Substrate is bound by residues N80, M109, Y139, H175, 195 to 197 (SRG), 236 to 239 (DSLR), and E275. Residue H279 coordinates Zn(2+). Y302 is a substrate binding site. Zn(2+) is bound at residue H343. C423, C426, and C431 together coordinate [4Fe-4S] cluster.

It belongs to the ThiC family. Requires [4Fe-4S] cluster as cofactor.

The enzyme catalyses 5-amino-1-(5-phospho-beta-D-ribosyl)imidazole + S-adenosyl-L-methionine = 4-amino-2-methyl-5-(phosphooxymethyl)pyrimidine + CO + 5'-deoxyadenosine + formate + L-methionine + 3 H(+). Its pathway is cofactor biosynthesis; thiamine diphosphate biosynthesis. In terms of biological role, catalyzes the synthesis of the hydroxymethylpyrimidine phosphate (HMP-P) moiety of thiamine from aminoimidazole ribotide (AIR) in a radical S-adenosyl-L-methionine (SAM)-dependent reaction. This chain is Phosphomethylpyrimidine synthase, found in Synechococcus sp. (strain CC9902).